The primary structure comprises 493 residues: Transcript termination protein A18 (493 aa).

The Helicase ATP-binding domain maps to 100-256; it reads MIELKRPLYI…NSIINIAKLS (157 aa). An ATP-binding site is contributed by 113 to 120; that stretch reads LACGFGKT. The DESH box motif lies at 206–209; sequence DESH.

It belongs to the helicase family. Poxviruses subfamily. As to quaternary structure, interacts with G2. Might be part of a transcription complex composed at least of G2, A18, and H5.

The protein resides in the virion. DNA helicase which seems to act as a postreplicative transcription termination factor. Involved in ATP-dependent release of nascent RNA. Forms a stable complex with single-stranded DNA, and to a lesser extent RNA. The sequence is that of Transcript termination protein A18 from Camelus.